A 232-amino-acid polypeptide reads, in one-letter code: MRLPTPLYPGTLVRRYQRFLADVQLADGTIVTAHCPNSGSMKGCNLPGSLVWLSKSTNPARKLAYTWELVMADGFWAGINTGLPNRLVREAIEDGTVTELQGYGSIRPEVRYGEERSRIDLLLEGEPGRCWVEVKNVTLVEGERALFPDAVTERGQKHLRELMEMVRRGDRGVIFYVVQRGDGEAVSPADAIDPKYGQLLRLAVANGVEALAYRALVTPEEIRLTERLPVIL.

Belongs to the SfsA family.

This Geobacter metallireducens (strain ATCC 53774 / DSM 7210 / GS-15) protein is Sugar fermentation stimulation protein homolog.